The chain runs to 408 residues: Serine/threonine transporter SstT (408 aa).

9 consecutive transmembrane segments (helical) span residues 11-31 (LANG…VILA), 43-63 (FLGS…VFIL), 81-101 (PIVV…VVLS), 141-161 (ALMT…GLAL), 192-212 (IGIF…AIAG), 216-236 (LLAV…PLIV), 298-318 (MGGA…TLGI), 330-350 (VVAA…LLLI), and 357-377 (FGIS…IGVI).

It belongs to the dicarboxylate/amino acid:cation symporter (DAACS) (TC 2.A.23) family.

It localises to the cell inner membrane. It catalyses the reaction L-serine(in) + Na(+)(in) = L-serine(out) + Na(+)(out). The enzyme catalyses L-threonine(in) + Na(+)(in) = L-threonine(out) + Na(+)(out). In terms of biological role, involved in the import of serine and threonine into the cell, with the concomitant import of sodium (symport system). This Shewanella sp. (strain W3-18-1) protein is Serine/threonine transporter SstT.